Reading from the N-terminus, the 148-residue chain is UPAR/Ly6 domain-containing protein bero (148 aa).

The first 23 residues, 1–23 (MVSALKCSLAVAVMISLACSAYA), serve as a signal peptide directing secretion. Cystine bridges form between Cys-26/Cys-72, Cys-29/Cys-37, Cys-51/Cys-90, Cys-102/Cys-116, and Cys-119/Cys-124. A glycan (N-linked (GlcNAc...) asparagine) is linked at Asn-68. An N-linked (GlcNAc...) asparagine glycan is attached at Asn-125. Asn-125 carries GPI-anchor amidated asparagine lipidation. Positions 126-148 (GSSSLAPIAGAILLFFGVARLLA) are cleaved as a propeptide — removed in mature form. A helical transmembrane segment spans residues 128–148 (SSLAPIAGAILLFFGVARLLA).

This sequence belongs to the quiver family.

Its subcellular location is the cell membrane. It is found in the membrane. The protein localises to the perikaryon. The protein resides in the cell projection. It localises to the neuron projection. Its function is as follows. Necessary for the maintenance of persistent fluctuating activities and suppression of acute evoked activities in abdominal leucokinin-producing (ABLK) neurons to negatively regulate neuron excitability involved in nociceptive (perception of pain) behavioral responses. The chain is UPAR/Ly6 domain-containing protein bero from Drosophila melanogaster (Fruit fly).